A 415-amino-acid chain; its full sequence is MLSRLSQTALVALSLMTVLTEAVPSRMRIQTRDSVNYQSEIVRGVNLGGWLVLEPWITPSIFENGGGAAVDEWTLAEVLGKDKARAILSQHWSSFITQDDFNQIAQAGMNHVRIPVGYWAVSAPDEPYVDGQLEFLDNAISWARAAGLKVMIDLHGAPGSQNGFDNSGRKGPIAWQQGDTVARTVDAFKALAERYLPESDVVTAIEAVNEPNIPGGVNEGQLKEYYNQVLEVVHSINPDAGVFLSDGFLATASWNGYANGENVVMDTHHYHMFDNTLISLDINAHVRAACEFGNQIKGSDKPVVVGEWTGALTDCTKHLNGKDIPTRYEGQWANSPRYGDCGNKRQGSSSGLSEQERSDTRRFIEAQLDAYEGKNGWLFWTWKTEGAPGWDMQDLLANGLFPNPPTERQYGNQCA.

The N-terminal stretch at 1 to 22 (MLSRLSQTALVALSLMTVLTEA) is a signal peptide. Catalysis depends on Glu-210, which acts as the Proton donor. 2 cysteine pairs are disulfide-bonded: Cys-290-Cys-414 and Cys-315-Cys-341. Residue Glu-307 is the Nucleophile of the active site. The tract at residues 335–359 (SPRYGDCGNKRQGSSSGLSEQERSD) is disordered.

The protein belongs to the glycosyl hydrolase 5 (cellulase A) family. Monomer. Requires Mn(2+) as cofactor.

It is found in the secreted. The catalysed reaction is Successive hydrolysis of beta-D-glucose units from the non-reducing ends of (1-&gt;3)-beta-D-glucans, releasing alpha-glucose.. Beta-glucanases participate in the metabolism of beta-glucan, the main structural component of the cell wall. It could also function biosynthetically as a transglycosylase. The sequence is that of Probable glucan 1,3-beta-glucosidase A (exgA) from Aspergillus clavatus (strain ATCC 1007 / CBS 513.65 / DSM 816 / NCTC 3887 / NRRL 1 / QM 1276 / 107).